Here is a 207-residue protein sequence, read N- to C-terminus: 3-hexulose-6-phosphate synthase (207 aa).

It belongs to the HPS/KGPDC family. HPS subfamily.

It catalyses the reaction D-ribulose 5-phosphate + formaldehyde = D-arabino-hex-3-ulose 6-phosphate. It participates in one-carbon metabolism; formaldehyde assimilation via RuMP pathway; D-fructose 6-phosphate from D-ribulose 5-phosphate and formaldehyde: step 1/2. Catalyzes the condensation of ribulose 5-phosphate with formaldehyde to form 3-hexulose 6-phosphate. This chain is 3-hexulose-6-phosphate synthase (rmpA), found in Mycobacterium gastri.